The primary structure comprises 128 residues: Calcitonin gene-related peptide 1 (128 aa).

Positions 1–25 are cleaved as a signal peptide; sequence MGFQKFSPFLALSILVLLQAGSLHA. A propeptide spanning residues 26 to 80 is cleaved from the precursor; that stretch reads APFRSALESSPADPATLSEDEARLLLAALVQDYVQMKASELEQEQEREGSRIIAQ. Cysteine 84 and cysteine 89 are joined by a disulfide. Position 119 is a phenylalanine amide (phenylalanine 119). Residues 125-128 constitute a propeptide that is removed on maturation; it reads DLQA.

It belongs to the calcitonin family. As to expression, expressed in spinal cord.

It localises to the secreted. In terms of biological role, CGRP1/CALCA is a peptide hormone that induces vasodilation mediated by the CALCRL-RAMP1 receptor complex. Dilates a variety of vessels including the coronary, cerebral and systemic vasculature. Its abundance in the CNS also points toward a neurotransmitter or neuromodulator role. It also elevates platelet cAMP. CGRP1 can also bind and activate CALCR-RAMP1 (AMYR1) receptor complex. The sequence is that of Calcitonin gene-related peptide 1 from Homo sapiens (Human).